The following is a 202-amino-acid chain: Type II restriction enzyme MthZI (202 aa).

It carries out the reaction Endonucleolytic cleavage of DNA to give specific double-stranded fragments with terminal 5'-phosphates.. In terms of biological role, a P subtype restriction enzyme that recognizes the double-stranded sequence 5'-CTAG-3' and cleaves after C-1. The protein is Type II restriction enzyme MthZI of Methanothermobacter thermautotrophicus (Methanobacterium thermoformicicum).